The primary structure comprises 26 residues: 83 kDa hypersensitivity protein (26 aa).

A disordered region spans residues 1-26 (FTPEDFISAPRRGEAIPDPKGELAVF). Residues 11-26 (RRGEAIPDPKGELAVF) are compositionally biased toward basic and acidic residues.

The polypeptide is 83 kDa hypersensitivity protein (Trichophyton tonsurans (Scalp ringworm fungus)).